The following is a 184-amino-acid chain: Ribosome-recycling factor (184 aa).

Belongs to the RRF family.

It localises to the cytoplasm. In terms of biological role, responsible for the release of ribosomes from messenger RNA at the termination of protein biosynthesis. May increase the efficiency of translation by recycling ribosomes from one round of translation to another. The sequence is that of Ribosome-recycling factor from Stenotrophomonas maltophilia (strain R551-3).